Here is a 397-residue protein sequence, read N- to C-terminus: Purine ribonucleoside efflux pump NepI (397 aa).

Topologically, residues 1 to 21 are cytoplasmic; the sequence is MNENIAEKFRADGVARPNWSA. A helical transmembrane segment spans residues 22-42; the sequence is VFAVAFCVACLITVEFLPVSL. At 43-54 the chain is on the periplasmic side; the sequence is LTPMAQDLGISE. The helical transmembrane segment at 55–75 threads the bilayer; sequence GVAGQSVTVTAFVAMFSSLFI. Over 76-85 the chain is Cytoplasmic; it reads TQIIQATDRR. A helical transmembrane segment spans residues 86–106; sequence YIVILFAVLLTASCLMVSFAN. Ser107 is a topological domain (periplasmic). Residues 108-128 form a helical membrane-spanning segment; the sequence is FTLLLLGRACLGLALGGFWAI. Residues 129-147 are Cytoplasmic-facing; it reads SASLTMRLVPARTVPKALS. Residues 148–168 traverse the membrane as a helical segment; sequence VIFGAVSIALVIAAPLGSFLG. At 169 to 175 the chain is on the periplasmic side; sequence GIIGWRN. A helical transmembrane segment spans residues 176–196; that stretch reads VFNAAAVMGVLCVIWVVKSLP. At 197–215 the chain is on the cytoplasmic side; it reads SLPGEPSHQKQNMFSLLQR. Residues 216–236 traverse the membrane as a helical segment; the sequence is PGVMAGMIAIFMSFAGQFAFF. Residues 237 to 255 lie on the Periplasmic side of the membrane; that stretch reads TYIRPVYMNLAGFDVDGLT. Residues 256-276 traverse the membrane as a helical segment; the sequence is LVLLSFGIASFVGTSFSSYVL. Over 277–281 the chain is Cytoplasmic; that stretch reads KRSVK. A helical membrane pass occupies residues 282-302; the sequence is LALAGAPLLLALSALTLIVWG. At 303-305 the chain is on the periplasmic side; the sequence is SDK. A helical transmembrane segment spans residues 306–326; it reads TVAAAIAIIWGLAFALVPVGW. The Cytoplasmic portion of the chain corresponds to 327 to 343; sequence STWITRSLADQAEKAGS. Residues 344–364 form a helical membrane-spanning segment; it reads IQVAVIQLANTCGAAVGGYAL. Residues 365–366 lie on the Periplasmic side of the membrane; sequence DN. Residues 367-387 form a helical membrane-spanning segment; the sequence is FGLLSPLALSGGLMLLTALVV. Residues 388–397 lie on the Cytoplasmic side of the membrane; the sequence is AAKVRITPMS.

Belongs to the major facilitator superfamily. DHA1 family. NepI (TC 2.A.1.2.26) subfamily.

The protein localises to the cell inner membrane. It carries out the reaction inosine(in) + H(+)(out) = inosine(out) + H(+)(in). It catalyses the reaction guanosine(in) + H(+)(out) = guanosine(out) + H(+)(in). Involved in the efflux of purine ribonucleosides, such as inosine and guanosine. This chain is Purine ribonucleoside efflux pump NepI, found in Salmonella paratyphi A (strain ATCC 9150 / SARB42).